The following is a 652-amino-acid chain: DNA ligase (652 aa).

Residues 29 to 33 (DSDYD), 78 to 79 (SL), and Glu107 contribute to the NAD(+) site. The active-site N6-AMP-lysine intermediate is Lys109. NAD(+) is bound by residues Arg130, Glu164, Lys278, and Lys302. 4 residues coordinate Zn(2+): Cys395, Cys398, Cys413, and Cys418. The 76-residue stretch at 577 to 652 (NSDAALFGLT…IEDEDWLRQL (76 aa)) folds into the BRCT domain.

The protein belongs to the NAD-dependent DNA ligase family. LigA subfamily. Requires Mg(2+) as cofactor. The cofactor is Mn(2+).

The catalysed reaction is NAD(+) + (deoxyribonucleotide)n-3'-hydroxyl + 5'-phospho-(deoxyribonucleotide)m = (deoxyribonucleotide)n+m + AMP + beta-nicotinamide D-nucleotide.. In terms of biological role, DNA ligase that catalyzes the formation of phosphodiester linkages between 5'-phosphoryl and 3'-hydroxyl groups in double-stranded DNA using NAD as a coenzyme and as the energy source for the reaction. It is essential for DNA replication and repair of damaged DNA. The chain is DNA ligase from Streptococcus pyogenes serotype M4 (strain MGAS10750).